A 615-amino-acid polypeptide reads, in one-letter code: MIYMGGIVGNNSLLAKIGDYGEIEYLFYPQVGYETHFFDSALAVYDKKVKWHWDDDWDITQKYIEETNIFKTILEDDKIILTIKDFVPVSHNVLIRRVYIKNKLDKKLNFKLFFYENLRIGENPITNTVKFLEDGCIVKYNGKYIFCIGSDKRIDSFQCGNRYSKTSAYIDIENGILKEHKESSGLLTDSAISWNIKIDEKRSLAFNIYILPQRFDGDFSIITEQLKIIMNNSENIKNLSMNYWKHIIGEINRFIHPELRQNNKIYSITKRALMTLLMLCDKEGGIIAAPSLHPDYRYVWGRDGSYISIALDLFGIRNIPDRFFEFMSKIQNADGSWLQNYYVNGKPRLTAIQTDQIGSILWAMDVHYRLTGDRKFVERYWNTIEKAANYLRLVALNFTPCFDLWEERFGVFAYTMGATYAGLKCAYSMSKAVNKRDKVKDWGKTIEFLKHEVPKRFYLEDEERFAKSINPLDKTIDTSILGLSYPFNLIDVDDERMIKTAEAIEKAFKYKVGGIGRYPEDIYFGGNPWIITTLWLSLYYRRLYKVLKEKDDNGADIYLQKSKKLFNWVMKYSFDGLFPEQIHKELGVPMSAMPLGWSNAMFLIYVYENDKVIIP.

Asp403 serves as the catalytic Proton acceptor. The Proton donor role is filled by Glu406.

The protein belongs to the glycosyl hydrolase 15 family.

This is an uncharacterized protein from Methanocaldococcus jannaschii (strain ATCC 43067 / DSM 2661 / JAL-1 / JCM 10045 / NBRC 100440) (Methanococcus jannaschii).